Consider the following 429-residue polypeptide: Citrate synthase, plasmid (429 aa).

Active-site residues include His306 and Asp364.

The protein belongs to the citrate synthase family.

It carries out the reaction oxaloacetate + acetyl-CoA + H2O = citrate + CoA + H(+). The protein operates within carbohydrate metabolism; tricarboxylic acid cycle; isocitrate from oxaloacetate: step 1/2. The exact function of the plasmid-encoded citrate synthase is not clear, it could help nodulation by allowing the bacteria to use citrate as a chelator of iron and calcium. This is Citrate synthase, plasmid (pcsA) from Rhizobium tropici.